The primary structure comprises 446 residues: SWI/SNF chromatin-remodeling accessory subunit 1 (446 aa).

The disordered stretch occupies residues 1 to 53; sequence MQTQARPPVPQGPRFNHPATPQQVRRPINAPLPGQTAQIQGNRGPQPPKKKKR. Positions 220–297 constitute an SWIB/MDM2 domain; the sequence is YQPMKFKLHP…PQRLHQLLQQ (78 aa).

The protein belongs to the SMARCD family. In terms of assembly, component of the multiprotein chromatin-remodeling complexes SWI/SNF: SWI/SNF-A (BAF), SWI/SNF-B (PBAF) and related complexes. The canonical complex contains a catalytic subunit swsn-4, core subunits swsn-1 and swsn-5, and accessory subunits swsn-3, swsn-6, phf-10, dpff-1, swsn-9 and either ham-3/swsn-2.1 or swsn-2.2. May interact with blmp-1. In terms of tissue distribution, broadly expressed in all cell types.

It is found in the nucleus. Functionally, involved in transcriptional activation and repression of select genes by chromatin remodeling (alteration of DNA-nucleosome topology). Component of SWI/SNF chromatin remodeling complexes that carry out key enzymatic activities, changing chromatin structure by altering DNA-histone contacts within a nucleosome in an ATP-dependent manner. Required for the blmp-1-mediated transcriptional activation or repression of several hypodermal genes such as bed-3. Involved in regulating differentiation, migration and axon pathfinding of specific serotonergic neurons (HSNs). Probably regulates vulva development through the let-60/Ras pathway. May be involved in regulation of developmental processes in the embryo driven by the Wnt pathway. Involved in gonadogenesis. In Caenorhabditis elegans, this protein is SWI/SNF chromatin-remodeling accessory subunit 1.